The chain runs to 250 residues: Triosephosphate isomerase (250 aa).

Residue 9 to 11 (NWK) participates in substrate binding. The active-site Electrophile is the histidine 95. Glutamate 167 serves as the catalytic Proton acceptor. Substrate is bound by residues glycine 173, serine 213, and 234 to 235 (GG).

It belongs to the triosephosphate isomerase family. In terms of assembly, homodimer.

It is found in the cytoplasm. The catalysed reaction is D-glyceraldehyde 3-phosphate = dihydroxyacetone phosphate. It participates in carbohydrate biosynthesis; gluconeogenesis. It functions in the pathway carbohydrate degradation; glycolysis; D-glyceraldehyde 3-phosphate from glycerone phosphate: step 1/1. Its function is as follows. Involved in the gluconeogenesis. Catalyzes stereospecifically the conversion of dihydroxyacetone phosphate (DHAP) to D-glyceraldehyde-3-phosphate (G3P). The protein is Triosephosphate isomerase of Flavobacterium johnsoniae (strain ATCC 17061 / DSM 2064 / JCM 8514 / BCRC 14874 / CCUG 350202 / NBRC 14942 / NCIMB 11054 / UW101) (Cytophaga johnsonae).